The following is a 152-amino-acid chain: Cell division protein SepF (152 aa).

The disordered stretch occupies residues 25–54; that stretch reads EEREPVQEEKGTKDKAAFQERPQTGKQNVV. Residues 28–42 are compositionally biased toward basic and acidic residues; sequence EPVQEEKGTKDKAAF.

Belongs to the SepF family. In terms of assembly, homodimer. Interacts with FtsZ.

The protein resides in the cytoplasm. Its function is as follows. Cell division protein that is part of the divisome complex and is recruited early to the Z-ring. Probably stimulates Z-ring formation, perhaps through the cross-linking of FtsZ protofilaments. Its function overlaps with FtsA. The polypeptide is Cell division protein SepF (Bacillus pumilus (strain SAFR-032)).